Here is a 211-residue protein sequence, read N- to C-terminus: Small ribosomal subunit protein uS5 (211 aa).

An S5 DRBM domain is found at leucine 51–valine 114.

It belongs to the universal ribosomal protein uS5 family. Part of the 30S ribosomal subunit. Contacts protein S4.

Its function is as follows. With S4 and S12 plays an important role in translational accuracy. This Ignicoccus hospitalis (strain KIN4/I / DSM 18386 / JCM 14125) protein is Small ribosomal subunit protein uS5.